The chain runs to 991 residues: Glutamate receptor 1 (991 aa).

Positions 1 to 27 (MHSRLKFLAYLHFICASSIFWPEFSSA) are cleaved as a signal peptide. At 28–611 (QQQQQTVSLT…VFSFLNPLSQ (584 aa)) the chain is on the extracellular side. N-linked (GlcNAc...) asparagine glycans are attached at residues Asn67, Asn195, Asn208, and Asn281. Disordered regions lie at residues 300 to 321 (DSRK…GPNS) and 354 to 379 (FRSN…NESS). Over residues 308 to 318 (SGQSQSQNAGG) the composition is skewed to polar residues. Low complexity predominate over residues 365 to 379 (GGSSSSSATGTNESS). N-linked (GlcNAc...) asparagine glycans are attached at residues Asn376, Asn385, Asn426, Asn437, and Asn477. A helical transmembrane segment spans residues 612 to 632 (EIWISVILSYVGVSFVLYFVT). Residues 633-710 (RFPPYEWRIV…PSIAGRIAAA (78 aa)) lie on the Cytoplasmic side of the membrane. A helical transmembrane segment spans residues 711-731 (VWWFFTIILISSYTANLAAFL). Residues 732–895 (TVERMVAPIK…STPNELSLSN (164 aa)) are Extracellular-facing. Residues 896 to 916 (VAGIYYILIGGLLLAVIVAIM) traverse the membrane as a helical segment. The Cytoplasmic portion of the chain corresponds to 917-991 (EFFCRNKTPQ…ASNVRYQYSM (75 aa)).

This sequence belongs to the glutamate-gated ion channel (TC 1.A.10.1) family. As to quaternary structure, homooligomer. In terms of tissue distribution, central nervous system.

Its subcellular location is the cell membrane. It localises to the postsynaptic cell membrane. In terms of biological role, receptor for glutamate. L-glutamate acts as an excitatory neurotransmitter at many synapses in the central nervous system. The postsynaptic actions of Glu are mediated by a variety of receptors that are named according to their selective agonists. Forms ligand-gated ion channels which are activated by kainate. The chain is Glutamate receptor 1 (GluRIA) from Drosophila melanogaster (Fruit fly).